We begin with the raw amino-acid sequence, 352 residues long: Phosphoribosylformylglycinamidine cyclo-ligase (352 aa).

It belongs to the AIR synthase family.

It localises to the cytoplasm. The enzyme catalyses 2-formamido-N(1)-(5-O-phospho-beta-D-ribosyl)acetamidine + ATP = 5-amino-1-(5-phospho-beta-D-ribosyl)imidazole + ADP + phosphate + H(+). It participates in purine metabolism; IMP biosynthesis via de novo pathway; 5-amino-1-(5-phospho-D-ribosyl)imidazole from N(2)-formyl-N(1)-(5-phospho-D-ribosyl)glycinamide: step 2/2. In Hahella chejuensis (strain KCTC 2396), this protein is Phosphoribosylformylglycinamidine cyclo-ligase.